A 499-amino-acid polypeptide reads, in one-letter code: Lysine--tRNA ligase (499 aa).

Positions 403 and 410 each coordinate Mg(2+).

The protein belongs to the class-II aminoacyl-tRNA synthetase family. In terms of assembly, homodimer. Requires Mg(2+) as cofactor.

The protein localises to the cytoplasm. The enzyme catalyses tRNA(Lys) + L-lysine + ATP = L-lysyl-tRNA(Lys) + AMP + diphosphate. The sequence is that of Lysine--tRNA ligase from Campylobacter hominis (strain ATCC BAA-381 / DSM 21671 / CCUG 45161 / LMG 19568 / NCTC 13146 / CH001A).